Consider the following 200-residue polypeptide: Regulator of free ubiquitin chains 1 (200 aa).

The protein belongs to the RFU1 family. Interacts with BRO1 and DOA4.

The protein resides in the endosome. Its function is as follows. Inhibitor of the DOA4 deubiquitinase involved in the regulation of protein degradation by the proteasome and maintenance of a normal level of free ubiquitin. The protein is Regulator of free ubiquitin chains 1 (RFU1) of Saccharomyces cerevisiae (strain RM11-1a) (Baker's yeast).